Here is a 140-residue protein sequence, read N- to C-terminus: Endoribonuclease YbeY (140 aa).

His-99, His-103, and His-109 together coordinate Zn(2+).

It belongs to the endoribonuclease YbeY family. Zn(2+) serves as cofactor.

The protein resides in the cytoplasm. Its function is as follows. Single strand-specific metallo-endoribonuclease involved in late-stage 70S ribosome quality control and in maturation of the 3' terminus of the 16S rRNA. The polypeptide is Endoribonuclease YbeY (Wolinella succinogenes (strain ATCC 29543 / DSM 1740 / CCUG 13145 / JCM 31913 / LMG 7466 / NCTC 11488 / FDC 602W) (Vibrio succinogenes)).